Reading from the N-terminus, the 1076-residue chain is DNA-directed RNA polymerase subunit beta (1076 aa).

The protein belongs to the RNA polymerase beta chain family. In plastids the minimal PEP RNA polymerase catalytic core is composed of four subunits: alpha, beta, beta', and beta''. When a (nuclear-encoded) sigma factor is associated with the core the holoenzyme is formed, which can initiate transcription.

Its subcellular location is the plastid. It is found in the chloroplast. The catalysed reaction is RNA(n) + a ribonucleoside 5'-triphosphate = RNA(n+1) + diphosphate. Functionally, DNA-dependent RNA polymerase catalyzes the transcription of DNA into RNA using the four ribonucleoside triphosphates as substrates. This Hordeum vulgare (Barley) protein is DNA-directed RNA polymerase subunit beta.